Here is a 1024-residue protein sequence, read N- to C-terminus: Beta-galactosidase (1024 aa).

The substrate site is built by asparagine 103 and aspartate 202. Aspartate 202 is a binding site for Na(+). Mg(2+)-binding residues include glutamate 417, histidine 419, and glutamate 462. Substrate-binding positions include glutamate 462 and glutamate 538–histidine 541. Glutamate 462 acts as the Proton donor in catalysis. Glutamate 538 serves as the catalytic Nucleophile. Asparagine 598 contacts Mg(2+). Phenylalanine 602 and asparagine 605 together coordinate Na(+). Positions 605 and 1000 each coordinate substrate.

This sequence belongs to the glycosyl hydrolase 2 family. As to quaternary structure, homotetramer. Mg(2+) is required as a cofactor. Na(+) serves as cofactor.

It carries out the reaction Hydrolysis of terminal non-reducing beta-D-galactose residues in beta-D-galactosides.. The polypeptide is Beta-galactosidase (Escherichia coli O139:H28 (strain E24377A / ETEC)).